A 457-amino-acid chain; its full sequence is Argininosuccinate lyase (457 aa).

It belongs to the lyase 1 family. Argininosuccinate lyase subfamily.

Its subcellular location is the cytoplasm. The catalysed reaction is 2-(N(omega)-L-arginino)succinate = fumarate + L-arginine. It participates in amino-acid biosynthesis; L-arginine biosynthesis; L-arginine from L-ornithine and carbamoyl phosphate: step 3/3. The polypeptide is Argininosuccinate lyase (Shigella boydii serotype 18 (strain CDC 3083-94 / BS512)).